The sequence spans 250 residues: Triosephosphate isomerase (250 aa).

Substrate is bound at residue asparagine 9 to lysine 11. Histidine 95 serves as the catalytic Electrophile. Glutamate 167 (proton acceptor) is an active-site residue. Substrate is bound by residues glycine 173, serine 212, and glycine 233 to glycine 234.

It belongs to the triosephosphate isomerase family. Homodimer.

It localises to the cytoplasm. It carries out the reaction D-glyceraldehyde 3-phosphate = dihydroxyacetone phosphate. The protein operates within carbohydrate biosynthesis; gluconeogenesis. It functions in the pathway carbohydrate degradation; glycolysis; D-glyceraldehyde 3-phosphate from glycerone phosphate: step 1/1. In terms of biological role, involved in the gluconeogenesis. Catalyzes stereospecifically the conversion of dihydroxyacetone phosphate (DHAP) to D-glyceraldehyde-3-phosphate (G3P). The protein is Triosephosphate isomerase of Endomicrobium trichonymphae.